The sequence spans 156 residues: Small ribosomal subunit protein uS7 (156 aa).

Belongs to the universal ribosomal protein uS7 family. As to quaternary structure, part of the 30S ribosomal subunit. Contacts proteins S9 and S11.

In terms of biological role, one of the primary rRNA binding proteins, it binds directly to 16S rRNA where it nucleates assembly of the head domain of the 30S subunit. Is located at the subunit interface close to the decoding center, probably blocks exit of the E-site tRNA. This is Small ribosomal subunit protein uS7 from Campylobacter concisus (strain 13826).